The following is a 290-amino-acid chain: Probable branched-chain-amino-acid aminotransferase (290 aa).

An N6-(pyridoxal phosphate)lysine modification is found at Lys155.

This sequence belongs to the class-IV pyridoxal-phosphate-dependent aminotransferase family. The cofactor is pyridoxal 5'-phosphate.

It catalyses the reaction L-leucine + 2-oxoglutarate = 4-methyl-2-oxopentanoate + L-glutamate. The enzyme catalyses L-isoleucine + 2-oxoglutarate = (S)-3-methyl-2-oxopentanoate + L-glutamate. The catalysed reaction is L-valine + 2-oxoglutarate = 3-methyl-2-oxobutanoate + L-glutamate. It participates in amino-acid biosynthesis; L-isoleucine biosynthesis; L-isoleucine from 2-oxobutanoate: step 4/4. It functions in the pathway amino-acid biosynthesis; L-leucine biosynthesis; L-leucine from 3-methyl-2-oxobutanoate: step 4/4. The protein operates within amino-acid biosynthesis; L-valine biosynthesis; L-valine from pyruvate: step 4/4. In terms of biological role, acts on leucine, isoleucine and valine. This Rickettsia felis (strain ATCC VR-1525 / URRWXCal2) (Rickettsia azadi) protein is Probable branched-chain-amino-acid aminotransferase (ilvE).